The chain runs to 1465 residues: DNA polymerase III PolC-type (1465 aa).

The 157-residue stretch at Y427–L583 folds into the Exonuclease domain.

Belongs to the DNA polymerase type-C family. PolC subfamily.

It is found in the cytoplasm. The catalysed reaction is DNA(n) + a 2'-deoxyribonucleoside 5'-triphosphate = DNA(n+1) + diphosphate. In terms of biological role, required for replicative DNA synthesis. This DNA polymerase also exhibits 3' to 5' exonuclease activity. In Streptococcus pyogenes serotype M18 (strain MGAS8232), this protein is DNA polymerase III PolC-type.